The sequence spans 464 residues: Lysosomal dipeptide transporter MFSD1 (464 aa).

Residues 11-12 carry the Dileucine internalization motif motif; sequence LL. S20 carries the phosphoserine modification. 12 consecutive transmembrane segments (helical) span residues 38–58, 82–102, 112–132, 134–154, 190–210, 214–234, 265–285, 303–323, 330–350, 360–380, 391–411, and 417–437; these read LAHRLVVLSLMCFLGFGSYFC, LLYAWYSWPNVVLCFLGGFLI, TVIFSCFVCIGQVIFALGGIF, AFWLMELGRFVFGIGGESLAV, LMGWLYGKIEALLGSAGHMTL, LMIGCITCIFSLICALALAYL, LILVFVICVCYYVAVFPFIGL, AINSIVYIISAPMSPLFGLLV, IIWVLYAVAATLVSHMMLAFT, LLGFSYSLLACALWPMVAFIV, FMQSIQNLGLAVIAILAGMIL, and LLLEVFFIACVSLSLLAVVCL.

The protein belongs to the major facilitator superfamily. Homodimer. Interacts with lysosomal protein GLMP (via lumenal domain); the interaction starts while both proteins are still in the endoplasmic reticulum and is required for stabilization of MFSD1 in lysosomes but has no direct effect on its targeting to lysosomes or transporter activity. Not N-glycosylated. In brain, expressed in the cortex, striatum hippocampus, hypothalamus, thalamus and brainstem (at protein level). Widely expressed with highest levels in kidney and spleen (at protein level).

The protein resides in the lysosome membrane. The catalysed reaction is L-alpha-aminoacyl-L-arginine(out) = L-alpha-aminoacyl-L-arginine(in). The enzyme catalyses L-arginyl-L-alpha-amino acid(out) = L-arginyl-L-alpha-amino acid(in). It carries out the reaction L-arginyl-glycine(out) = L-arginyl-glycine(in). It catalyses the reaction L-alpha-aminoacyl-L-lysine(out) = L-alpha-aminoacyl-L-lysine(in). The catalysed reaction is L-aspartyl-L-lysine(out) = L-aspartyl-L-lysine(in). The enzyme catalyses L-alanyl-L-lysine(out) = L-alanyl-L-lysine(in). It carries out the reaction L-lysyl-L-alpha-amino acid(out) = L-lysyl-L-alpha-amino acid(in). It catalyses the reaction L-lysyl-L-alanine(out) = L-lysyl-L-alanine(in). The catalysed reaction is L-lysyl-L-lysine(out) = L-lysyl-L-lysine(in). The enzyme catalyses L-lysyl-glycine(out) = L-lysyl-glycine(in). It carries out the reaction L-alpha-aminoacyl-L-histidine(out) = L-alpha-aminoacyl-L-histidine(in). It catalyses the reaction L-histidyl-L-alpha-amino acid(out) = L-histidyl-L-alpha-amino acid(in). The catalysed reaction is L-histidyl-glycine(out) = L-histidyl-glycine(in). Lysosomal dipeptide uniporter that selectively exports lysine, arginine or histidine-containing dipeptides with a net positive charge from the lysosome lumen into the cytosol. Could play a role in a specific type of protein O-glycosylation indirectly regulating macrophages migration and tissue invasion. Also essential for liver homeostasis. This Mus musculus (Mouse) protein is Lysosomal dipeptide transporter MFSD1.